Reading from the N-terminus, the 177-residue chain is Large ribosomal subunit protein uL6 (177 aa).

The protein belongs to the universal ribosomal protein uL6 family. As to quaternary structure, part of the 50S ribosomal subunit.

Its function is as follows. This protein binds to the 23S rRNA, and is important in its secondary structure. It is located near the subunit interface in the base of the L7/L12 stalk, and near the tRNA binding site of the peptidyltransferase center. The protein is Large ribosomal subunit protein uL6 of Magnetococcus marinus (strain ATCC BAA-1437 / JCM 17883 / MC-1).